A 129-amino-acid chain; its full sequence is Small ribosomal subunit protein uS11 (129 aa).

This sequence belongs to the universal ribosomal protein uS11 family. In terms of assembly, part of the 30S ribosomal subunit. Interacts with proteins S7 and S18. Binds to IF-3.

Its function is as follows. Located on the platform of the 30S subunit, it bridges several disparate RNA helices of the 16S rRNA. Forms part of the Shine-Dalgarno cleft in the 70S ribosome. This Stenotrophomonas maltophilia (strain R551-3) protein is Small ribosomal subunit protein uS11.